The chain runs to 414 residues: COUP transcription factor 2 (414 aa).

The tract at residues 1-72 (MAMVVSTWRD…PGGPGSDKQQ (72 aa)) is disordered. Positions 27-37 (PPVPGPPPGAP) are enriched in pro residues. Residues 38–54 (HTPQTPGQGGPASTPAQ) are compositionally biased toward low complexity. T51 is modified (phosphothreonine). Residues 76-151 (HIECVVCGDK…VGMRREAVQR (76 aa)) constitute a DNA-binding region (nuclear receptor). 2 consecutive NR C4-type zinc fingers follow at residues 79-99 (CVVC…CEGC) and 115-139 (CRAN…LKKC). Residues 117-414 (ANRNCPIDQH…SFNWPYMAIQ (298 aa)) form an interaction with ZFPM2 region. The NR LBD domain occupies 177–403 (YLSGYISLLL…TLIRDMLLSG (227 aa)). Positions 337–414 (LQEKSQCALE…SFNWPYMAIQ (78 aa)) are important for dimerization.

This sequence belongs to the nuclear hormone receptor family. NR2 subfamily. Interacts with SQSTM1. Binds DNA as a dimer; homodimer or heterodimer with NR2F6. Interacts with NCOA1, NCOA2, NCOA3 and PPARGC1A. Interacts with ZFPM2.

The protein resides in the nucleus. In terms of biological role, ligand-activated transcription factor. Activated by high concentrations of 9-cis-retinoic acid and all-trans-retinoic acid, but not by dexamethasone, cortisol or progesterone (in vitro). Regulation of the apolipoprotein A-I gene transcription. Binds to DNA site A. May be required to establish ovary identity during early gonad development. This Rattus norvegicus (Rat) protein is COUP transcription factor 2 (Nr2f2).